A 596-amino-acid chain; its full sequence is Elongation factor 4 (596 aa).

In terms of domain architecture, tr-type G spans 2-184; it reads KHIRNFSIIA…VIVAQIPSPE (183 aa). Residues 14-19 and 131-134 contribute to the GTP site; these read DHGKST and NKID.

It belongs to the TRAFAC class translation factor GTPase superfamily. Classic translation factor GTPase family. LepA subfamily.

Its subcellular location is the cell inner membrane. The enzyme catalyses GTP + H2O = GDP + phosphate + H(+). Functionally, required for accurate and efficient protein synthesis under certain stress conditions. May act as a fidelity factor of the translation reaction, by catalyzing a one-codon backward translocation of tRNAs on improperly translocated ribosomes. Back-translocation proceeds from a post-translocation (POST) complex to a pre-translocation (PRE) complex, thus giving elongation factor G a second chance to translocate the tRNAs correctly. Binds to ribosomes in a GTP-dependent manner. The sequence is that of Elongation factor 4 from Shewanella sediminis (strain HAW-EB3).